A 301-amino-acid chain; its full sequence is Homeobox protein Nkx-2.6 (301 aa).

Residues Glu22–Pro135 form a disordered region. The homeobox DNA-binding region spans Arg132 to Arg191.

It belongs to the NK-2 homeobox family.

The protein localises to the nucleus. Acts as a transcriptional activator. In conjunction with NKX2-5, may play a role in both pharyngeal and cardiac embryonic development. The polypeptide is Homeobox protein Nkx-2.6 (NKX2-6) (Homo sapiens (Human)).